We begin with the raw amino-acid sequence, 410 residues long: Arginine deiminase (410 aa).

Residue cysteine 400 is the Amidino-cysteine intermediate of the active site.

This sequence belongs to the arginine deiminase family.

The protein localises to the cytoplasm. It carries out the reaction L-arginine + H2O = L-citrulline + NH4(+). Its pathway is amino-acid degradation; L-arginine degradation via ADI pathway; carbamoyl phosphate from L-arginine: step 1/2. The sequence is that of Arginine deiminase from Levilactobacillus brevis (strain ATCC 367 / BCRC 12310 / CIP 105137 / JCM 1170 / LMG 11437 / NCIMB 947 / NCTC 947) (Lactobacillus brevis).